Consider the following 350-residue polypeptide: MNGTEGPNFYVPMSNATGVVRSPFEYPQYYLAEPWAFSILAAYMFFLIITGFPINFLTLYVTIEHKKLRTPLNYILLNLAVADLFMVFGGFTTTMYTSMHGYFVFGETGCNLEGYFATLGGEISLWSLVVLAIERWVVVCKPISNFRFGENHAIMGLTLTWVMANACAMPPLFGWSRYIPEGLQCSCGIDYYTLKPEVNNESFVIYMFLVHFTIPLTIISFCYGRLVCAVKEAAAQQQESETTQRAEREVTRMVVIMVISFLVCWIPYASVAWYIFTHQGSTFGPIFMTVPSFFAKSSSIYNPMIYICMNKQFRNCMITTLFCGKNPFEGEEEGSTTKTEASAVSSVSPA.

Residues 1 to 36 are Extracellular-facing; that stretch reads MNGTEGPNFYVPMSNATGVVRSPFEYPQYYLAEPWA. Asn2 and Asn15 each carry an N-linked (GlcNAc...) asparagine glycan. The helical transmembrane segment at 37–61 threads the bilayer; that stretch reads FSILAAYMFFLIITGFPINFLTLYV. Residues 62–73 are Cytoplasmic-facing; it reads TIEHKKLRTPLN. A helical transmembrane segment spans residues 74–98; the sequence is YILLNLAVADLFMVFGGFTTTMYTS. At 99–113 the chain is on the extracellular side; the sequence is MHGYFVFGETGCNLE. The cysteines at positions 110 and 187 are disulfide-linked. A helical transmembrane segment spans residues 114–133; sequence GYFATLGGEISLWSLVVLAI. At 134–152 the chain is on the cytoplasmic side; the sequence is ERWVVVCKPISNFRFGENH. The chain crosses the membrane as a helical span at residues 153-176; that stretch reads AIMGLTLTWVMANACAMPPLFGWS. Residues 177–202 are Extracellular-facing; it reads RYIPEGLQCSCGIDYYTLKPEVNNES. The N-linked (GlcNAc...) asparagine glycan is linked to Asn200. A helical transmembrane segment spans residues 203–230; it reads FVIYMFLVHFTIPLTIISFCYGRLVCAV. Over 231–252 the chain is Cytoplasmic; it reads KEAAAQQQESETTQRAEREVTR. Residues 253 to 276 traverse the membrane as a helical segment; sequence MVVIMVISFLVCWIPYASVAWYIF. The Extracellular portion of the chain corresponds to 277–284; it reads THQGSTFG. The chain crosses the membrane as a helical span at residues 285–309; it reads PIFMTVPSFFAKSSSIYNPMIYICM. Lys296 carries the N6-(retinylidene)lysine modification. Over 310 to 350 the chain is Cytoplasmic; the sequence is NKQFRNCMITTLFCGKNPFEGEEEGSTTKTEASAVSSVSPA. Positions 330–350 are disordered; the sequence is GEEEGSTTKTEASAVSSVSPA.

Belongs to the G-protein coupled receptor 1 family. Opsin subfamily. In terms of processing, phosphorylated on some or all of the serine and threonine residues present in the C-terminal region. Rod shaped photoreceptor cells which mediates vision in dim light.

It localises to the membrane. In terms of biological role, visual pigments are the light-absorbing molecules that mediate vision. They consist of an apoprotein, opsin, covalently linked to cis-retinal. This Conger conger (Conger eel) protein is Blue-sensitive opsin.